Here is a 315-residue protein sequence, read N- to C-terminus: Methionine import ATP-binding protein MetN (315 aa).

The ABC transporter domain maps to 2–219 (IEIEKVCVDF…PQHAFTQQLV (218 aa)). 16–23 (GTSGAGKS) provides a ligand contact to ATP.

Belongs to the ABC transporter superfamily. Methionine importer (TC 3.A.1.24) family. In terms of assembly, the complex is composed of two ATP-binding proteins (MetN), two transmembrane proteins (MetI) and a solute-binding protein (MetQ).

The protein localises to the cell inner membrane. It carries out the reaction L-methionine(out) + ATP + H2O = L-methionine(in) + ADP + phosphate + H(+). The enzyme catalyses D-methionine(out) + ATP + H2O = D-methionine(in) + ADP + phosphate + H(+). In terms of biological role, part of the ABC transporter complex MetNIQ involved in methionine import. Responsible for energy coupling to the transport system. In Salmonella enteritidis, this protein is Methionine import ATP-binding protein MetN.